A 533-amino-acid polypeptide reads, in one-letter code: Probable ribonuclease ZC3H12D (533 aa).

The RNase NYN domain occupies 92 to 246 (LRPIVIDGSN…PLGRRGPTLS (155 aa)). The C3H1-type zinc-finger motif lies at 251–282 (KKPRPPEPSWQHCPYGKKCTYGVKCRFYHPER). Positions 262-368 (HCPYGKKCTY…ASGVVSQSRG (107 aa)) are necessary for interaction with ZC3H12A. A disordered region spans residues 302–335 (LGGGAEEPRTPSARSRPTTARLLPQEPGEHDLPP).

It belongs to the ZC3H12 family. As to quaternary structure, interacts with ZC3H12A. The cofactor is Mg(2+). As to expression, expressed at low levels in bone marrow derived macrophages.

It is found in the cytoplasm. The protein localises to the P-body. In terms of biological role, may regulate cell growth likely by suppressing RB1 phosphorylation. May function as RNase and regulate the levels of target RNA species (Potential). In association with ZC3H12A enhances the degradation of interleukin IL-6 mRNA level in activated macrophages. Serve as a tumor suppressor in certain leukemia cells. Overexpression inhibits the G1 to S phase progression through suppression of RB1 phosphorylation. In Mus musculus (Mouse), this protein is Probable ribonuclease ZC3H12D.